The sequence spans 175 residues: Bifunctional protein PyrR (175 aa).

Residues 40–41 (TR), 102–110 (DDVLYTGRT), Arg-135, and Val-159 each bind substrate. The PRPP-binding motif lies at 98–110 (VVIIDDVLYTGRT).

The protein belongs to the purine/pyrimidine phosphoribosyltransferase family. PyrR subfamily. Homodimer and homohexamer; in equilibrium.

It carries out the reaction UMP + diphosphate = 5-phospho-alpha-D-ribose 1-diphosphate + uracil. Its function is as follows. Regulates transcriptional attenuation of the pyrimidine nucleotide (pyr) operon by binding in a uridine-dependent manner to specific sites on pyr mRNA. This disrupts an antiterminator hairpin in the RNA and favors formation of a downstream transcription terminator, leading to a reduced expression of downstream genes. Also displays a weak uracil phosphoribosyltransferase activity which is not physiologically significant. The sequence is that of Bifunctional protein PyrR from Staphylococcus epidermidis (strain ATCC 12228 / FDA PCI 1200).